Here is a 249-residue protein sequence, read N- to C-terminus: Probable transcriptional regulator ycf27 (249 aa).

The 114-residue stretch at 13–126 (HLLIVDDENN…ELEARIQSIL (114 aa)) folds into the Response regulatory domain. D62 is modified (4-aspartylphosphate). The segment at residues 82–100 (DIPIIMLTALEDVLDKVTG) is a DNA-binding region (H-T-H motif). Positions 142-246 (INLFKTGSLN…ARGTGYLCRK (105 aa)) form a DNA-binding region, ompR/PhoB-type.

It is found in the plastid. It localises to the chloroplast. Its function is as follows. Probable promoter-specific protein mediating the interaction between DNA and RNA polymerase. This is Probable transcriptional regulator ycf27 (ycf27) from Cyanidium caldarium (Red alga).